Consider the following 454-residue polypeptide: MQLYSSVCTHYPAGTPGPTAAAPPATAAAAFKVSLQSASPAAAAPEPDTGERPPAAATEPREAAAAAAMPAFSACFERSGSAAAPPGACSKPPLPPHFTSTAHIAVRALGAERLLLPPPSAPSPPRRGSSAWLLEELLRPDEPAAPNAVRDAPDRNFRLSEHRQALAASQHRAPAPAPVGPEPGAGPGSGPWGEERRAERSSRGWDRASGRSDASGSDALRRQDPEAEAHPVPAPARSSGEPAQNGEGEAVGTSRADPRDEKLALYLAEVERQDKYLRQRNKYRFHIIPDGNCLYRAVSKTVYGDQSLHRELREQTVHYIADHLDHFSPLIEGDVGEFIIAAAQDGAWAGYPELLAMGQMLNVNIHLTTGGRLESPTVSTMIHYLGPEDSLRPSIWLSWLSNGHYDAVFDHSYPNPEYDNWCKQTQIQKKRDEELAKSMAISLSKMYIEQNACS.

Disordered regions lie at residues Gln36 to Ala64 and Leu116 to Asp257. Residues Arg52–Ala64 are compositionally biased toward low complexity. The span at Leu116–Pro125 shows a compositional bias: pro residues. 3 stretches are compositionally biased toward basic and acidic residues: residues Asp151–Gln164, Gly193–Gly210, and Ala219–Ala229. The OTU domain maps to Lys282–His411. The segment at Ile287–Cys293 is cys-loop. Residue Asp290 is part of the active site. Residue Cys293 is the Nucleophile of the active site. Residues Ala342–Pro352 form a his-loop region. The variable-loop stretch occupies residues Trp399 to His404. His404 is an active-site residue. A UIM domain is found at Lys430–Glu449.

It catalyses the reaction Thiol-dependent hydrolysis of ester, thioester, amide, peptide and isopeptide bonds formed by the C-terminal Gly of ubiquitin (a 76-residue protein attached to proteins as an intracellular targeting signal).. Functionally, deubiquitinating enzyme that specifically hydrolyzes 'Lys-63'-linked polyubiquitin to monoubiquitin. Required for the stability and translation of a subset mRNAs with a high abundance of rare codons by mediating deubiquitination of 40S ribosomal protein RPS10/eS10, thereby antagonizing ZNF598-mediated 40S ubiquitination. The abundance of rare codons in mRNAs can limit the translation rate and can lead to ribosome collisions that trigger activation of ribosome quality control (RQC) pathway by ZNF598. OTUD1-mediated deubiquitination prevents activation of the RQC and subsequent dissociation of ribosomes and stimulates formation of polysomes and translation. The sequence is that of OTU domain-containing protein 1 (Otud1) from Mus musculus (Mouse).